Reading from the N-terminus, the 261-residue chain is RING finger and CHY zinc finger domain-containing protein 1 (261 aa).

The CHY-type zinc finger occupies 13-80; sequence QERGQRGCEH…AQQTCEECST (68 aa). Zn(2+) contacts are provided by Cys20, His22, Cys33, Cys34, Cys40, Cys43, His44, His50, Cys62, Cys65, Cys75, Cys78, Cys87, Cys90, His101, Cys102, Cys105, Cys108, His118, Cys119, Cys122, Cys125, His134, and Cys136. The CTCHY-type zinc finger occupies 82–144; it reads FGEYYCDICH…KCIENVSRQN (63 aa). An RING-type zinc finger spans residues 145 to 189; sequence CPICLEDIHTSRVVAHVLPCGHLLHRTCYEEMLKEGYRCPLCMHS. Ser257 is subject to Phosphoserine.

In terms of assembly, monomer and homodimer. Interacts with AR, MDM2, KAT5, PLAG1, PLAGL2, COPE, UBE2D2 and GORAB/NTKLBP1. In terms of processing, subject to ubiquitination and proteasomal degradation. Interaction with PLAGL2 or KAT5 enhances protein stability.

The protein localises to the nucleus. Its subcellular location is the nucleus speckle. The protein resides in the cytoplasm. The enzyme catalyses S-ubiquitinyl-[E2 ubiquitin-conjugating enzyme]-L-cysteine + [acceptor protein]-L-lysine = [E2 ubiquitin-conjugating enzyme]-L-cysteine + N(6)-ubiquitinyl-[acceptor protein]-L-lysine.. The protein operates within protein modification; protein ubiquitination. Its function is as follows. E3 ubiquitin-protein ligase that mediates ubiquitination of target proteins, including p53/TP53, TP73, HDAC1 and CDKN1B. Mediates ubiquitination and degradation of p53/TP53; preferentially acts on tetrameric p53/TP53. Catalyzes monoubiquitinates the translesion DNA polymerase POLH. Involved in the ribosome-associated quality control (RQC) pathway, which mediates the extraction of incompletely synthesized nascent chains from stalled ribosomes: RCHY1 acts downstream of NEMF and recognizes CAT tails associated with stalled nascent chains, leading to their ubiquitination and degradation. In terms of biological role, has no E3 ubiquitin-protein ligase activity. This Homo sapiens (Human) protein is RING finger and CHY zinc finger domain-containing protein 1 (RCHY1).